A 63-amino-acid chain; its full sequence is Alpha-toxin CsE5 (63 aa).

The region spanning 2–61 (KDGYPVDSGNCKYECLKDDYCNDLCLERKADKGYCYWGKVSCYCYGLPDNSPTKTSGKCN) is the LCN-type CS-alpha/beta domain. 4 disulfides stabilise this stretch: Cys-12/Cys-60, Cys-16/Cys-36, Cys-22/Cys-43, and Cys-26/Cys-45.

This sequence belongs to the long (4 C-C) scorpion toxin superfamily. Sodium channel inhibitor family. Alpha subfamily. As to expression, expressed by the venom gland.

It is found in the secreted. Functionally, alpha toxins bind voltage-independently at site-3 of sodium channels (Nav) and inhibit the inactivation of the activated channels, thereby blocking neuronal transmission. The polypeptide is Alpha-toxin CsE5 (Centruroides sculpturatus (Arizona bark scorpion)).